The sequence spans 104 residues: Integration host factor subunit beta (104 aa).

Belongs to the bacterial histone-like protein family. Heterodimer of an alpha and a beta chain.

Functionally, this protein is one of the two subunits of integration host factor, a specific DNA-binding protein that functions in genetic recombination as well as in transcriptional and translational control. The polypeptide is Integration host factor subunit beta (Chromobacterium violaceum (strain ATCC 12472 / DSM 30191 / JCM 1249 / CCUG 213 / NBRC 12614 / NCIMB 9131 / NCTC 9757 / MK)).